Here is a 504-residue protein sequence, read N- to C-terminus: Cytochrome P450 6B6 (504 aa).

Cys445 lines the heme pocket.

It belongs to the cytochrome P450 family. Heme is required as a cofactor.

Its subcellular location is the endoplasmic reticulum membrane. It is found in the microsome membrane. It catalyses the reaction an organic molecule + reduced [NADPH--hemoprotein reductase] + O2 = an alcohol + oxidized [NADPH--hemoprotein reductase] + H2O + H(+). This chain is Cytochrome P450 6B6 (CYP6B6), found in Helicoverpa armigera (Cotton bollworm).